The sequence spans 275 residues: UBX domain-containing protein 8 (275 aa).

Position 1 (Met1) is a topological domain, cytoplasmic. Residues 2-22 traverse the membrane as a helical segment; sequence ASRGVVGIFLLSALPLLCLEL. Residues 23 to 33 are Lumenal-facing; sequence RRGKPDLGIKD. Residues 34–54 form a helical membrane-spanning segment; that stretch reads LILLCGRIFLLLALLTLIISV. The Cytoplasmic segment spans residues 55–275; it reads TTSWVNSFKP…LNVEEKEQSS (221 aa). The tract at residues 137–181 is disordered; sequence DEDLELDSESQTSFETSNREAAKRRNLPNSVTNISPPAEQPTKKE. A UBX domain is found at 192 to 268; the sequence is TAEEVVTVAL…GITVDTVLNV (77 aa).

As to quaternary structure, interacts with SYVN1 and VCP.

It localises to the endoplasmic reticulum membrane. Its function is as follows. Involved in endoplasmic reticulum-associated degradation (ERAD) for misfolded lumenal proteins, possibly by tethering VCP to the endoplasmic reticulum membrane. May play a role in reproduction. In terms of biological role, may play a role in reproduction. The protein is UBX domain-containing protein 8 (UBXN8) of Bos taurus (Bovine).